The primary structure comprises 747 residues: Plakophilin-1 (747 aa).

The segment at 1–234 (MNHSPLKTAL…SFGHSRASSK (234 aa)) is required for binding to single stranded DNA. The segment at 1-286 (MNHSPLKTAL…ESAKQQVYQL (286 aa)) is required for interaction with EIF4A1. Position 4 is a phosphoserine (Ser4). The interval 48-68 (TVKRQKSKSSQSSTLSHSNRG) is disordered. Phosphorylation in this region is required for cytoplasmic localization and protein stabilization regions lie at residues 54-69 (SKSS…NRGS) and 116-191 (RFSS…STCS). At Ser118 the chain carries Phosphoserine; by PKB/AKT2. Residues Ser119, Ser121, and Ser142 each carry the phosphoserine modification. Residues 160 to 269 (YCDPRGTLRK…KYQAIGAYYI (110 aa)) are required for WNT-mediated nuclear localization. 9 ARM repeats span residues 243 to 274 (SGLT…HTCF), 275 to 316 (QDES…NLVF), 317 to 359 (RSTT…NLSS), 360 to 415 (TDEL…KRLG), 416 to 463 (MREL…NCVA), 525 to 556 (NYDC…LNLM), 557 to 603 (GKSK…IARL), 604 to 649 (LQSG…SHTG), and 650 to 713 (NTSN…DMWS).

This sequence belongs to the beta-catenin family. Part of a complex that contains DSG3, PKP1, YAP1 and YWHAG; the complex is required for localization of DSG3 and YAP1 to the cell membrane in keratinocytes. Interacts with DSP. Interacts (via N-terminus) with KRT5/CK5, KRT8/CK8 (via rod domain), KRT15/CK15 and KRT18/CK18 (via rod domain) as part of intermediate filaments. Interacts with VIM (via rod domain). Interacts with DSP. Interacts with DES. Interacts with FXR1; the interaction may facilitate the binding of PKP1 to PKP2, PKP3 and DSP mRNA. Interacts (via N-terminus) with EIF4A1; the interaction promotes EIF4A1 recruitment to the cap-dependent translation complex and EIF4A1 ATPase activity. Interacts with TJP1/ZO-1; the interaction facilitates TJP1/ZO-1 localization to the plasma membrane. Interacts (when phosphorylated) with YWHAG; the interaction results in translocation of PKP1 to the cytoplasm and loss of intercellular adhesion in keratinocytes. In terms of processing, phosphorylated by AKT2; required for interaction with YWHAG and subsequent localization away from desmosomes to the cytoplasm. Phosphorylation of Ser-118 by AKT2 promotes PKP1-driven cap-dependent mRNA translation and decreases intercellular adhesion, phosphorylation is promoted by insulin. Phosphorylation by RIPK4 at the N-terminus is required for its role in differentiation of keratinocytes and DSG1 localization at cell junctions. Expressed in stratified squamous, complex, glandular duct and bladder epithelia (at protein level). In terms of tissue distribution, widely expressed (at protein level).

It localises to the cell junction. The protein resides in the desmosome. It is found in the nucleus. Its subcellular location is the cytoplasm. The protein localises to the perinuclear region. It localises to the cell membrane. The protein resides in the stress granule. Functionally, a component of desmosome cell-cell junctions which are required for positive regulation of cellular adhesion. Plays a role in desmosome protein expression regulation and localization to the desmosomal plaque, thereby maintaining cell sheet integrity and anchorage of desmosomes to intermediate filaments. Required for localization of DSG3 and YAP1 to the cell membrane in keratinocytes in response to mechanical strain, via the formation of an interaction complex composed of DSG3, YAP1, PKP1 and YWHAG. Positively regulates differentiation of keratinocytes, potentially via promoting localization of DSG1 at desmosome cell junctions. Required for calcium-independent development and maturation of desmosome plaques specifically at lateral cell-cell contacts in differentiating keratinocytes. Plays a role in the maintenance of DSG3 protein abundance, DSG3 clustering and localization of these clusters to the cell membrane in keratinocytes. May also promote keratinocyte proliferation and morphogenesis during postnatal development. Required for tight junction inside-out transepidermal barrier function of the skin. Promotes Wnt-mediated proliferation and differentiation of ameloblasts, via facilitating TJP1/ZO-1 localization to tight junctions. Binds single-stranded DNA (ssDNA), and may thereby play a role in sensing DNA damage and promoting cell survival. Positively regulates cap-dependent translation and as a result cell proliferation, via recruitment of EIF4A1 to the initiation complex and promotion of EIF4A1 ATPase activity. Regulates the mRNA stability and protein abundance of desmosome components PKP2, PKP3, DSC2 and DSP, potentially via its interaction with FXR1. This is Plakophilin-1 (PKP1) from Homo sapiens (Human).